Consider the following 222-residue polypeptide: Probable transaldolase (222 aa).

The active-site Schiff-base intermediate with substrate is the lysine 91.

This sequence belongs to the transaldolase family. Type 3B subfamily.

The protein resides in the cytoplasm. The enzyme catalyses D-sedoheptulose 7-phosphate + D-glyceraldehyde 3-phosphate = D-erythrose 4-phosphate + beta-D-fructose 6-phosphate. The protein operates within carbohydrate degradation; pentose phosphate pathway; D-glyceraldehyde 3-phosphate and beta-D-fructose 6-phosphate from D-ribose 5-phosphate and D-xylulose 5-phosphate (non-oxidative stage): step 2/3. Transaldolase is important for the balance of metabolites in the pentose-phosphate pathway. The polypeptide is Probable transaldolase (Chlorobaculum tepidum (strain ATCC 49652 / DSM 12025 / NBRC 103806 / TLS) (Chlorobium tepidum)).